A 197-amino-acid chain; its full sequence is Prefoldin subunit 3 (197 aa).

N-acetylalanine is present on A2. K59 bears the N6-acetyllysine mark.

It belongs to the prefoldin subunit alpha family. As to quaternary structure, heterohexamer of two PFD-alpha type and four PFD-beta type subunits. Binds to the C-terminal part of VHL. Ubiquitous.

The protein resides in the cytoplasm. Its subcellular location is the nucleus. In terms of biological role, binds specifically to cytosolic chaperonin (c-CPN) and transfers target proteins to it. Binds to nascent polypeptide chain and promotes folding in an environment in which there are many competing pathways for nonnative proteins. The sequence is that of Prefoldin subunit 3 (VBP1) from Homo sapiens (Human).